The sequence spans 442 residues: Microfibrillar-associated protein 1 (442 aa).

Disordered stretches follow at residues 1–34 (MSAP…YGEG) and 113–203 (EVVS…PRLK). Composition is skewed to acidic residues over residues 134-148 (DTSE…DEEI) and 181-198 (ESEL…EDEM).

This sequence belongs to the MFAP1 family. In terms of assembly, component of the spliceosome B complex. Interacts with PRPF38A (via N-terminal interaction domain). As to expression, widely expressed.

The protein localises to the nucleus. Its function is as follows. Involved in pre-mRNA splicing as a component of the spliceosome. The polypeptide is Microfibrillar-associated protein 1 (Gallus gallus (Chicken)).